Consider the following 233-residue polypeptide: LexA repressor (233 aa).

Residues 26 to 46 constitute a DNA-binding region (H-T-H motif); it reads FDEMKDALDLRSKSGIHRLIT. Catalysis depends on for autocatalytic cleavage activity residues Ser-154 and Lys-192.

This sequence belongs to the peptidase S24 family. As to quaternary structure, homodimer.

It carries out the reaction Hydrolysis of Ala-|-Gly bond in repressor LexA.. Its function is as follows. Represses a number of genes involved in the response to DNA damage (SOS response), including recA and lexA. In the presence of single-stranded DNA, RecA interacts with LexA causing an autocatalytic cleavage which disrupts the DNA-binding part of LexA, leading to derepression of the SOS regulon and eventually DNA repair. The protein is LexA repressor of Nitrobacter hamburgensis (strain DSM 10229 / NCIMB 13809 / X14).